The following is a 503-amino-acid chain: MEEHGVTQTEHMATIEAHAVAQQVQQVHVATYTEHSMLSADEDSPSSPEDTSYDDSDILNSTAADEVTAHLAAAGPVGMAAAAAVATGKKRKRPHVFESNPSIRKRQQTRLLRKLRATLDEYTTRVGQQAIVLCISPSKPNPVFKVFGAAPLENVVRKYKSMILEDLESALAEHAPAPQEVNSELPPLTIDGIPVSVDKMTQAQLRAFIPEMLKYSTGRGKPGWGKESCKPIWWPEDIPWANVRSDVRTEEQKQRVSWTQALRTIVKNCYKQHGREDLLYAFEDQQTQTQATTTHSIAHLVPSQTVVQTFSNPDGTVSLIQVGTGATVATLADASELPTTVTVAQVNYSAVADGEVEQNWATLQGGEMTIQTTQASEATQAVASLAEAAVAASQEMQQGATVTMALNSEAAAHAVATLAEATLQGGGQIVLSGETAAAVGALTGVQDANGLVQIPVSMYQTVVTSLAQGNGPVQVAMAPVTTRISDSAVTMDGQAVEVVTLEQ.

A dimerization region spans residues 1–78 (MEEHGVTQTE…AHLAAAGPVG (78 aa)). The tract at residues 36-57 (SMLSADEDSPSSPEDTSYDDSD) is disordered. Residues serine 39, serine 44, serine 46, serine 47, and serine 52 each carry the phosphoserine; by CK2 modification. The Nuclear localization signal motif lies at 88–116 (GKKRKRPHVFESNPSIRKRQQTRLLRKLR). A DNA-binding region spans residues 109–305 (TRLLRKLRAT…SIAHLVPSQT (197 aa)). Lysine 139 participates in a covalent cross-link: Glycyl lysine isopeptide (Lys-Gly) (interchain with G-Cter in SUMO2). The required for transcriptional activation stretch occupies residues 301–476 (VPSQTVVQTF…AQGNGPVQVA (176 aa)).

It belongs to the NRF1/Ewg family. In terms of assembly, homodimer. Binds DNA as a dimer. Interacts with PPRC1. Post-translationally, phosphorylation enhances DNA binding. In terms of tissue distribution, widely expressed in embryonic, fetal, and adult tissues.

Its subcellular location is the nucleus. In terms of biological role, transcription factor that activates the expression of the EIF2S1 (EIF2-alpha) gene. Links the transcriptional modulation of key metabolic genes to cellular growth and development. Implicated in the control of nuclear genes required for respiration, heme biosynthesis, and mitochondrial DNA transcription and replication. This chain is Nuclear respiratory factor 1 (Nrf1), found in Mus musculus (Mouse).